The primary structure comprises 165 residues: Ribosome maturation factor RimM (165 aa).

The 73-residue stretch at 89-161 (EADTHYIVDL…KIVVKPVRQW (73 aa)) folds into the PRC barrel domain.

The protein belongs to the RimM family. In terms of assembly, binds ribosomal protein uS19.

Its subcellular location is the cytoplasm. An accessory protein needed during the final step in the assembly of 30S ribosomal subunit, possibly for assembly of the head region. Essential for efficient processing of 16S rRNA. May be needed both before and after RbfA during the maturation of 16S rRNA. It has affinity for free ribosomal 30S subunits but not for 70S ribosomes. The polypeptide is Ribosome maturation factor RimM (Clostridium botulinum (strain Alaska E43 / Type E3)).